The chain runs to 390 residues: ATP-sensitive inward rectifier potassium channel 11 (390 aa).

Topologically, residues 1–65 are cytoplasmic; it reads MLSRKGIIPE…LQDVFTTLVD (65 aa). The ATP site is built by N48 and R50. A helical transmembrane segment spans residues 66 to 92; that stretch reads LKWPHTLLIFTMSFLCSWLLFAMVWWL. The Extracellular segment spans residues 93–116; sequence IAFAHGDLAPGEGTNVPCVTSIHS. A disulfide bridge links C110 with C142. An intramembrane region (discontinuously helical; Pore-forming) is located at residues 117–133; it reads FSSAFLFSIEVQVTIGF. Residues T130 and F133 each coordinate K(+). The short motif at 130-135 is the Selectivity filter element; that stretch reads TIGFGG. The Extracellular portion of the chain corresponds to 134 to 142; sequence GGRMVTEEC. Residues 143–171 traverse the membrane as a helical segment; the sequence is PLAILILIVQNIVGLMINAIMLGCIFMKT. Residues 172–390 lie on the Cytoplasmic side of the membrane; that stretch reads AQAHRRAETL…KFSISPDSLS (219 aa). Residue R176 participates in a 1,2-diacyl-sn-glycero-3-phospho-(1D-myo-inositol-4,5-bisphosphate) binding. Y330 serves as a coordination point for ATP. The residue at position 341 (T341) is a Phosphothreonine; by MAPK1. S385 is subject to Phosphoserine; by MAPK1.

Belongs to the inward rectifier-type potassium channel (TC 1.A.2.1) family. KCNJ11 subfamily. As to quaternary structure, homotetramer; the homotetramer binds four ATP molecules (one ATP per subunit). Forms an heterooctamer with ABCC8/SUR1; one KCNJ11 homotetramer interacts with four ABCC8/SUR1 molecules. Interacts with ABCC9/SUR2. Phosphorylation by MAPK1 results in changes in channel gating that destabilize the closed states and reduce the ATP sensitivity.

The protein resides in the membrane. It carries out the reaction K(+)(in) = K(+)(out). With respect to regulation, KATP channels are regulated by cytoplasmic ATP/ADP ratios; ATP inhibits the channel by closing the pore, while ADP activates the channel. Activated by phosphatidylinositol 4,5-biphosphate (PtdIns(4,5)P2). Inward rectifier potassium channel that forms the pore of ATP-sensitive potassium channels (KATP), regulating potassium permeability as a function of cytoplasmic ATP and ADP concentrations in many different cells. Inward rectifier potassium channels are characterized by a greater tendency to allow potassium to flow into the cell rather than out of it. Their voltage dependence is regulated by the concentration of extracellular potassium; as external potassium is raised, the voltage range of the channel opening shifts to more positive voltages. The inward rectification is mainly due to the blockage of outward current by internal magnesium. Can be blocked by extracellular barium. In pancreatic cells, it forms KATP channels with ABCC8/SUR1. Can form cardiac and smooth muscle-type KATP channels with ABCC9. This Mus musculus (Mouse) protein is ATP-sensitive inward rectifier potassium channel 11 (Kcnj11).